We begin with the raw amino-acid sequence, 325 residues long: Probable exonuclease subunit 1 (325 aa).

Could consist of two subunits: D13 and D12.

Possible exonuclease involved in phage DNA recombination, replication, and repair. This chain is Probable exonuclease subunit 1 (D12), found in Escherichia coli (Enterobacteria phage T5).